Consider the following 147-residue polypeptide: Large ribosomal subunit protein bL9 (147 aa).

It belongs to the bacterial ribosomal protein bL9 family.

Binds to the 23S rRNA. In Mycoplasma capricolum subsp. capricolum (strain California kid / ATCC 27343 / NCTC 10154), this protein is Large ribosomal subunit protein bL9.